Consider the following 399-residue polypeptide: Enoyl-[acyl-carrier-protein] reductase [NADH] 2 (399 aa).

NAD(+)-binding positions include 48-53 (GASSGF), 75-76 (FE), 112-113 (DA), and 141-142 (LA). Tyr227 lines the substrate pocket. Tyr237 (proton donor) is an active-site residue. NAD(+) is bound by residues Lys246 and 275-277 (LVT).

The protein belongs to the TER reductase family. In terms of assembly, monomer.

The catalysed reaction is a 2,3-saturated acyl-[ACP] + NAD(+) = a (2E)-enoyl-[ACP] + NADH + H(+). Its pathway is lipid metabolism; fatty acid biosynthesis. In terms of biological role, involved in the final reduction of the elongation cycle of fatty acid synthesis (FAS II). Catalyzes the reduction of a carbon-carbon double bond in an enoyl moiety that is covalently linked to an acyl carrier protein (ACP). The sequence is that of Enoyl-[acyl-carrier-protein] reductase [NADH] 2 from Vibrio parahaemolyticus serotype O3:K6 (strain RIMD 2210633).